Reading from the N-terminus, the 60-residue chain is Antimicrobial peptide Eval151 (60 aa).

The N-terminal stretch at 1 to 23 (MKVLPVLFLTLLVLISIPAETFC) is a signal peptide. Arginine 36 is subject to Arginine amide. Residues 36–54 (RGKRNDFFRSDVSRDDESH) show a composition bias toward basic and acidic residues. The tract at residues 36 to 60 (RGKRNDFFRSDVSRDDESHPSPGQK) is disordered. Residues 37–60 (GKRNDFFRSDVSRDDESHPSPGQK) constitute a propeptide that is removed on maturation.

Belongs to the non-disulfide-bridged peptide (NDBP) superfamily. Expressed by the venom gland.

Its subcellular location is the secreted. In terms of biological role, probable antimicrobial peptide. Has no inhibitory activity against herpes simplex virus type 1 (HSV-1). The sequence is that of Antimicrobial peptide Eval151 from Euscorpiops validus (Scorpion).